Here is a 1247-residue protein sequence, read N- to C-terminus: MDSPIFSNDIDSIKNNTYQAKSYQKYNNSNNYNNNNNNSFNNYSNGSNYGGYNNSGNNSNYNNNNNLYNNNNINNNNNNNNNNNINNNNNNINNNNNINNNNSNNNNNNNNNNSNSNNSINSNSYKVNTPTQNGKSSHSPPLINANANVVFPTFKSLDLSSDTVNSVGAANNGSSNSSPTINGISNSNTMNNNNNNNNNNNNNSNSSNNNNNGNNNNNNNYNSFVNITKNNNNTNSNNYNNSTNSNNNGYNNNNNNNSISNSNSNSNSNSNSNSNSNSNSNSNSNSNSNSNSNSSSNSSSSSNNNNNNNNNNNNNNNSSSSSSNSNGNNNNNYHSYGYSNSKYNQQKSYNNAPHQLNSGGGQNSYYNKNNYNNGNGNIGNGNNSGSGNSSNSNGWSGGYQKQNGANRYQSQSQQQPQQQQQQQPQQPQQPQQQQQQQQQQQQQQQQQQQQQQQQQQQQQQQQQQQQQQQQQQQQPPQQQQQQQQDIGDSSRMNGGSRVPKAPGSDIGFNRGLNNSLNGQTDLNNSNYNSNSNNNNTNNNNTNNNLVNGKLQHYNYNNSSFKFNKNAQYNNGNNNGNNNNNNNNNNNNNNNNNNNSNNNSTNNNNINNSGNNNISNSVSSNSNGNVGSNPHRFQKNHFEKPFNSNSSTPSTPPNSTPSSSTTTSPSSSFNTYSNTFNNGSSNSFNNGSFNNSFNNGSSSNGSFNHGSFNNGSSISSFSGSFNNGSSGSGFNASFNGGSNSNSFNNGDNNNNNNNNNNNNHHNNDIDDSEPIIDQLDSTGEEEMDNLIGKLDLFSTKSESLFHTWKLNYSNRNNNNNNNSNNNNNNNNSSNNNSNSNNNNDNNNNDSFDGSNSDSQNIETDRTTTKVYITGKNFNNHNNNNNNNNNNNNHHYNNNNNNNNNNNNNNNNNNNNNNNNNNNNNNNNNNENNNGDVFSNGFSTWTPKSGSNSLNNSQNNLSNGQNSSNNSQNNLNNSQNSLNSSGNHHSNYHGHNNHHHYNNNNNNNNNNNNNNNNNNNNNNNGNGYVKSYYNNKYQQKSPQHQSSNSVVLIPPPGFSTIAPPPGFSTNNNNNNNNNNNNNNNKNNNSNNNNIIEVGKANYQTSTLNNSQDDSYQQEQEQQEQESQQQQQQQQQQQQQQQQQQQQQQQQQNYSSTPPNITPHLKGDGGLEKWFGNNIYSFGASQSLNNENTNPSYSYVPYNNNNNNNNNFNNINNDNNDNDIINNNHQQTNPSLQNDTPPIKMLSLEEIERW.

Disordered stretches follow at residues 25–141 (KYNN…HSPP), 169–431 (AANN…QQPQ), 472–667 (QQQP…PSSS), 738–770 (NSNS…SEPI), 807–857 (YSNR…QNIE), 869–1087 (GKNF…NNNN), 1099–1122 (STLN…ESQQ), and 1139–1162 (QQQQ…KGDG). Residues 26 to 125 (YNNSNNYNNN…SNNSINSNSY (100 aa)) show a composition bias toward low complexity. The span at 126-139 (KVNTPTQNGKSSHS) shows a compositional bias: polar residues. 3 stretches are compositionally biased toward low complexity: residues 169 to 178 (AANNGSSNSS), 185 to 223 (SNSN…NYNS), and 230 to 341 (NNNN…YSNS). The span at 342 to 356 (KYNQQKSYNNAPHQL) shows a compositional bias: polar residues. Low complexity-rich tracts occupy residues 363–375 (NSYY…NNGN), 385–394 (GSGNSSNSNG), 409–431 (QSQS…QQPQ), and 472–484 (QQQP…QQQQ). The span at 511 to 522 (GLNNSLNGQTDL) shows a compositional bias: polar residues. Low complexity-rich tracts occupy residues 523–544 (NNSN…TNNN), 553–628 (YNYN…VGSN), 655–667 (TPSS…PSSS), 738–759 (NSNS…NNNH), 807–855 (YSNR…DSQN), and 871–928 (NFNN…ENNN). A compositionally biased stretch (polar residues) spans 929–942 (GDVFSNGFSTWTPK). Positions 943–983 (SGSNSLNNSQNNLSNGQNSSNNSQNNLNNSQNSLNSSGNHH) are enriched in low complexity. The span at 984–995 (SNYHGHNNHHHY) shows a compositional bias: basic residues. Over residues 996–1021 (NNNNNNNNNNNNNNNNNNNNNNNGNG) the composition is skewed to low complexity. The segment covering 1026–1044 (YYNNKYQQKSPQHQSSNSV) has biased composition (polar residues). Over residues 1047–1060 (IPPPGFSTIAPPPG) the composition is skewed to pro residues. The span at 1064–1087 (NNNNNNNNNNNNNNNKNNNSNNNN) shows a compositional bias: low complexity. Residues 1099–1108 (STLNNSQDDS) are compositionally biased toward polar residues. Residues 1110–1122 (QQEQEQQEQESQQ) are compositionally biased toward low complexity.

This is an uncharacterized protein from Dictyostelium discoideum (Social amoeba).